Reading from the N-terminus, the 88-residue chain is Small ribosomal subunit protein bS20 (88 aa).

The tract at residues 1–27 (MANSKSAKKRALQSEKRRQHNASRRSM) is disordered.

This sequence belongs to the bacterial ribosomal protein bS20 family.

Its function is as follows. Binds directly to 16S ribosomal RNA. The protein is Small ribosomal subunit protein bS20 of Shewanella putrefaciens (strain CN-32 / ATCC BAA-453).